Reading from the N-terminus, the 157-residue chain is Small ribosomal subunit protein uS7 (157 aa).

Belongs to the universal ribosomal protein uS7 family. Part of the 30S ribosomal subunit. Contacts proteins S9 and S11.

In terms of biological role, one of the primary rRNA binding proteins, it binds directly to 16S rRNA where it nucleates assembly of the head domain of the 30S subunit. Is located at the subunit interface close to the decoding center, probably blocks exit of the E-site tRNA. The sequence is that of Small ribosomal subunit protein uS7 from Borrelia turicatae (strain 91E135).